The sequence spans 1013 residues: Sodium/potassium-transporting ATPase subunit alpha-3 (1013 aa).

Basic and acidic residues predominate over residues 1-10; that stretch reads MGDKKDDKSS. The interval 1 to 24 is disordered; that stretch reads MGDKKDDKSSPKKSKAKERRDLDD. Residues 1–77 are Cytoplasmic-facing; that stretch reads MGDKKDDKSS…NALTPPPTTP (77 aa). 2 positions are modified to phosphoserine: S37 and S56. Positions 72 to 74 are interaction with phosphoinositide-3 kinase; it reads PPP. A helical membrane pass occupies residues 78–98; the sequence is EWVKFCRQLFGGFSILLWIGA. Topologically, residues 99–121 are extracellular; sequence ILCFLAYGIQAGTEDDPSGDNLY. Residues 122-142 traverse the membrane as a helical segment; sequence LGIVLAAVVIITGCFSYYQEA. Over 143 to 278 the chain is Cytoplasmic; sequence KSSKIMESFK…VGKTPIAIEI (136 aa). Phosphoserine occurs at positions 218 and 265. Residues 279–298 form a helical membrane-spanning segment; sequence EHFIQLITGVAVFLGVSFFI. At 299–310 the chain is on the extracellular side; that stretch reads LSLILGYTWLEA. The helical transmembrane segment at 311 to 328 threads the bilayer; the sequence is VIFLIGIIVANVPEGLLA. Residues 329–762 are Cytoplasmic-facing; it reads TVTVCLTLTA…EEGRLIFDNL (434 aa). The active-site 4-aspartylphosphate intermediate is the D366. S442 is subject to Phosphoserine. Y548 is subject to Phosphotyrosine. Residues D707 and D711 each contribute to the Mg(2+) site. The helical transmembrane segment at 763 to 782 threads the bilayer; it reads KKSIAYTLTSNIPEITPFLL. Over 783 to 792 the chain is Extracellular; that stretch reads FIMANIPLPL. The helical transmembrane segment at 793–813 threads the bilayer; sequence GTITILCIDLGTDMVPAISLA. Over 814–833 the chain is Cytoplasmic; sequence YEAAESDIMKRQPRNPRTDK. A helical transmembrane segment spans residues 834–856; that stretch reads LVNERLISMAYGQIGMIQALGGF. At 857–908 the chain is on the extracellular side; sequence FSYFVILAENGFLPGNLVGIRLNWDDRTVNDLEDSYGQQWTYEQRKVVEFTC. Residues 909–928 form a helical membrane-spanning segment; it reads HTAFFVSIVVVQWADLIICK. Residues 929–941 are Cytoplasmic-facing; the sequence is TRRNSVFQQGMKN. S933 bears the Phosphoserine; by PKA mark. A helical membrane pass occupies residues 942 to 960; the sequence is KILIFGLFEETALAAFLSY. Residues 961–975 lie on the Extracellular side of the membrane; sequence CPGMDVALRMYPLKP. The helical transmembrane segment at 976–996 threads the bilayer; the sequence is SWWFCAFPYSFLIFVYDEIRK. Residues 997-1013 lie on the Cytoplasmic side of the membrane; sequence LILRRNPGGWVEKETYY.

It belongs to the cation transport ATPase (P-type) (TC 3.A.3) family. Type IIC subfamily. In terms of assembly, the sodium/potassium-transporting ATPase is composed of a catalytic alpha subunit, an auxiliary non-catalytic beta subunit and an additional regulatory subunit. Interacts with regulatory subunit FXYD1.

The protein localises to the cell membrane. The catalysed reaction is K(+)(out) + Na(+)(in) + ATP + H2O = K(+)(in) + Na(+)(out) + ADP + phosphate + H(+). Its function is as follows. This is the catalytic component of the active enzyme, which catalyzes the hydrolysis of ATP coupled with the exchange of sodium and potassium ions across the plasma membrane. This action creates the electrochemical gradient of sodium and potassium ions, providing the energy for active transport of various nutrients. The protein is Sodium/potassium-transporting ATPase subunit alpha-3 (Atp1a3) of Mus musculus (Mouse).